Here is a 156-residue protein sequence, read N- to C-terminus: ATP synthase subunit b (156 aa).

The chain crosses the membrane as a helical span at residues 7-29 (LIGQSLTFIAFILFCMKYVWPQL).

The protein belongs to the ATPase B chain family. F-type ATPases have 2 components, F(1) - the catalytic core - and F(0) - the membrane proton channel. F(1) has five subunits: alpha(3), beta(3), gamma(1), delta(1), epsilon(1). F(0) has three main subunits: a(1), b(2) and c(10-14). The alpha and beta chains form an alternating ring which encloses part of the gamma chain. F(1) is attached to F(0) by a central stalk formed by the gamma and epsilon chains, while a peripheral stalk is formed by the delta and b chains.

Its subcellular location is the cell inner membrane. In terms of biological role, f(1)F(0) ATP synthase produces ATP from ADP in the presence of a proton or sodium gradient. F-type ATPases consist of two structural domains, F(1) containing the extramembraneous catalytic core and F(0) containing the membrane proton channel, linked together by a central stalk and a peripheral stalk. During catalysis, ATP synthesis in the catalytic domain of F(1) is coupled via a rotary mechanism of the central stalk subunits to proton translocation. Component of the F(0) channel, it forms part of the peripheral stalk, linking F(1) to F(0). This Saccharophagus degradans (strain 2-40 / ATCC 43961 / DSM 17024) protein is ATP synthase subunit b.